The following is a 315-amino-acid chain: Kinetochore protein SPC25 homolog (315 aa).

At Met-1 the chain carries N-acetylmethionine. A coiled-coil region spans residues 57 to 91; it reads TAQSQVELMNLKADLREAEDELVKVLAVKTRKEAR. Residues 261–315 form a disordered region; it reads APAISFSTDTNMSTPENKRSKVQVNRRQKRGSESPLLAPVSTSATRRSSRFKGKK. Residues 266–275 are compositionally biased toward polar residues; that stretch reads FSTDTNMSTP. Positions 280–289 are enriched in basic residues; that stretch reads SKVQVNRRQK.

Belongs to the SPC25 family. As to quaternary structure, component of the NDC80 complex, which consists of NDC80, NUF2, SPC24 and SPC25.

The protein localises to the chromosome. It is found in the centromere. Its function is as follows. Acts as a component of the essential kinetochore-associated NDC80 complex, which is required for chromosome segregation and spindle checkpoint activity to ensure proper cell division. The protein is Kinetochore protein SPC25 homolog of Arabidopsis thaliana (Mouse-ear cress).